Consider the following 337-residue polypeptide: Tryptophan--tRNA ligase (337 aa).

Residues 11-13 (QPT) and 19-20 (GN) each bind ATP. A 'HIGH' region motif is present at residues 12–20 (PTGALHLGN). Aspartate 135 contributes to the L-tryptophan binding site. Residues 147–149 (GED), valine 191, and 200–204 (KMSKS) each bind ATP. The 'KMSKS' region signature appears at 200 to 204 (KMSKS).

This sequence belongs to the class-I aminoacyl-tRNA synthetase family. As to quaternary structure, homodimer.

It localises to the cytoplasm. It carries out the reaction tRNA(Trp) + L-tryptophan + ATP = L-tryptophyl-tRNA(Trp) + AMP + diphosphate + H(+). Its function is as follows. Catalyzes the attachment of tryptophan to tRNA(Trp). This is Tryptophan--tRNA ligase from Prochlorococcus marinus (strain MIT 9313).